Consider the following 908-residue polypeptide: Glutamate receptor ionotropic, kainate 2 (908 aa).

Positions 1-31 (MKIIFPILSNPVFRRTVKLLLCLLWIGYSQG) are cleaved as a signal peptide. Residues 32 to 561 (TTHVLRFGGI…VFSFLNPLSP (530 aa)) lie on the Extracellular side of the membrane. N-linked (GlcNAc...) asparagine glycans are attached at residues N67, N73, N275, N378, N412, N423, and N430. An intrachain disulfide couples C96 to C347. L-glutamate-binding residues include P516, A518, and R523. N546 carries an N-linked (GlcNAc...) asparagine glycan. A helical membrane pass occupies residues 562–582 (DIWMYVLLACLGVSCVLFVIA). Topologically, residues 583–638 (RFSPYEWYNPHPCNPDSDVVENNFTLLNSFWFGVGALMRQGSELMPKALSTRIVGG) are cytoplasmic. Residues 639–659 (IWWFFTLIIISSYTANLAAFL) form a helical membrane-spanning segment. Residues 660–819 (TVERMESPID…KEASALGVQN (160 aa)) are Extracellular-facing. Residues A689, T690, and E738 each contribute to the L-glutamate site. An intrachain disulfide couples C750 to C804. N751 carries an N-linked (GlcNAc...) asparagine glycan. Residues 820–840 (IGGIFIVLAAGLVLSVFVAVG) traverse the membrane as a helical segment. The Cytoplasmic segment spans residues 841–908 (EFLYKSKKNA…RRLPGKETMA (68 aa)). Phosphoserine; by PKC occurs at positions 846 and 868. K886 is covalently cross-linked (Glycyl lysine isopeptide (Lys-Gly) (interchain with G-Cter in SUMO1)).

This sequence belongs to the glutamate-gated ion channel (TC 1.A.10.1) family. GRIK2 subfamily. In terms of assembly, homotetramer and heterotetramer with GRIK5. Tetramers may be formed by the dimerization of dimers. Assembles into a kainate-gated homomeric channel that does not bind AMPA. Can form functional heteromeric receptors with GRIK3, GRIK4 and GRIK5. Interacts with NETO2. Interacts with DLG4. Interacts with NETO2. Interacts (via C-terminus) with KLHL17 (via kelch repeats); the interaction targets GRIK2 for degradation via ubiquitin-proteasome pathway. In terms of processing, sumoylation mediates kainate receptor-mediated endocytosis and regulates synaptic transmission. Sumoylation is enhanced by PIAS3 and desumoylated by SENP1. Ubiquitinated. Ubiquitination regulates the GRIK2 levels at the synapse by leading kainate receptor degradation through proteasome. Post-translationally, phosphorylated by PKC at Ser-868 upon agonist activation, this directly enhance sumoylation.

Its subcellular location is the cell membrane. The protein resides in the postsynaptic cell membrane. It carries out the reaction Ca(2+)(in) = Ca(2+)(out). It catalyses the reaction Na(+)(in) = Na(+)(out). With respect to regulation, cold receptor activity activated by temperatures between 10-19 degrees Celsius. In terms of biological role, ionotropic glutamate receptor that functions as a cation-permeable ligand-gated ion channel, gated by L-glutamate and the glutamatergic agonist kainic acid. L-glutamate acts as an excitatory neurotransmitter at many synapses in the central nervous system. Binding of the excitatory neurotransmitter L-glutamate induces a conformation change, leading to the opening of the cation channel, and thereby converts the chemical signal to an electrical impulse. The receptor then desensitizes rapidly and enters a transient inactive state, characterized by the presence of bound agonist. Modulates cell surface expression of NETO2. In association with GRIK3, involved in presynaptic facilitation of glutamate release at hippocampal mossy fiber synapses. Functionally, independent of its ionotropic glutamate receptor activity, acts as a thermoreceptor conferring sensitivity to cold temperatures. Functions in dorsal root ganglion neurons. The sequence is that of Glutamate receptor ionotropic, kainate 2 (GRIK2) from Macaca fascicularis (Crab-eating macaque).